A 399-amino-acid chain; its full sequence is 5'-C-glycyluridine monooxygenase-decarboxylase (399 aa).

Thr-179 provides a ligand contact to phosphate. Lys-230 carries the post-translational modification N6-(pyridoxal phosphate)lysine. Positions 318, 322, 353, and 367 each coordinate phosphate.

The protein belongs to the SelA family. Homooctamer; tetramer of homodimers. Requires pyridoxal 5'-phosphate as cofactor.

The catalysed reaction is (5'S,6'R)-C-glycyluridine + O2 = uridine-5'-carboxamide + CO2 + H2O. It participates in antibiotic biosynthesis. With respect to regulation, activity is dependent on phosphate. In terms of biological role, monooxygenase-decarboxylase involved in the biosynthesis of the capuramycin-type nucleoside antibiotic A-503083. Catalyzes the oxidative decarboxylation of 5'-C-glycyluridine (GlyU) to uridine-5'-carboxamide (CarU). Is stereospecific for the (5'S,6'R)-diastereomer of GlyU. Directly incorporates a single oxygen atom from O(2) into the product CarU. The chain is 5'-C-glycyluridine monooxygenase-decarboxylase from Streptomyces sp.